The chain runs to 95 residues: Large ribosomal subunit protein eL43 (95 aa).

The segment at 38–59 adopts a C4-type zinc-finger fold; sequence CPDCGSEAVSREGTGIWQCGKC.

The protein belongs to the eukaryotic ribosomal protein eL43 family. Zn(2+) is required as a cofactor.

This chain is Large ribosomal subunit protein eL43, found in Halobacterium salinarum (strain ATCC 29341 / DSM 671 / R1).